The following is a 315-amino-acid chain: Homoserine kinase (315 aa).

97-107 (PPARGLGSSAT) contributes to the ATP binding site.

The protein belongs to the GHMP kinase family. Homoserine kinase subfamily.

The protein localises to the cytoplasm. It carries out the reaction L-homoserine + ATP = O-phospho-L-homoserine + ADP + H(+). The protein operates within amino-acid biosynthesis; L-threonine biosynthesis; L-threonine from L-aspartate: step 4/5. Catalyzes the ATP-dependent phosphorylation of L-homoserine to L-homoserine phosphate. This chain is Homoserine kinase, found in Prochlorococcus marinus (strain NATL1A).